The following is a 115-amino-acid chain: Peptidyl-tRNA hydrolase (115 aa).

Belongs to the PTH2 family.

Its subcellular location is the cytoplasm. The enzyme catalyses an N-acyl-L-alpha-aminoacyl-tRNA + H2O = an N-acyl-L-amino acid + a tRNA + H(+). Functionally, the natural substrate for this enzyme may be peptidyl-tRNAs which drop off the ribosome during protein synthesis. This chain is Peptidyl-tRNA hydrolase, found in Methanococcoides burtonii (strain DSM 6242 / NBRC 107633 / OCM 468 / ACE-M).